A 246-amino-acid chain; its full sequence is Small ribosomal subunit protein uS2 (246 aa).

Residues 224–246 (AKQGEESAETEAKEAETTETTTA) form a disordered region. Residues 225–239 (KQGEESAETEAKEAE) are compositionally biased toward basic and acidic residues.

It belongs to the universal ribosomal protein uS2 family.

This Bacillus licheniformis (strain ATCC 14580 / DSM 13 / JCM 2505 / CCUG 7422 / NBRC 12200 / NCIMB 9375 / NCTC 10341 / NRRL NRS-1264 / Gibson 46) protein is Small ribosomal subunit protein uS2.